The sequence spans 97 residues: MLLHGLGRMNIIFICFPSLACLLTSRTPLCAPLFSHLDGMTPCPIDCGFAVGRSRGGGFGGKPESNSLHYDTMHKQHAMPFFIINPTEWKRNFCNTG.

The N-terminal stretch at 1–21 is a signal peptide; sequence MLLHGLGRMNIIFICFPSLAC.

This is an uncharacterized protein from Schizosaccharomyces pombe (strain 972 / ATCC 24843) (Fission yeast).